We begin with the raw amino-acid sequence, 632 residues long: Probable membrane transporter protein MamO (632 aa).

The chain crosses the membrane as a helical span at residues 25–45 (APVSILAFLILVTFAWGAYLL). The interval 78 to 268 (LYYTVPPAVV…VIVSHLQDVV (191 aa)) is protease-like. Positions 148 and 263 each coordinate a divalent metal cation. 7 consecutive transmembrane segments (helical) span residues 340–360 (IGGYSIADILGLGMLALAAGV), 412–432 (LVQWDKVKPLIPWGVAGVVIG), 434–454 (FIGNAIGDSVVGVLLGLFALI), 513–533 (AVLGLPMGLFSGILGISGGVI), 550–570 (IANSSVLVFWASVAGSVVAFI), 582–602 (APVTLALVMIPGAYVGGILGA), and 612–632 (VLKGIYAATMAAIAIKMLTTV). A TSUP-like region spans residues 365–632 (MTMGGGVLQV…AIAIKMLTTV (268 aa)).

The protein in the N-terminal section; belongs to the peptidase S1C family. It in the C-terminal section; belongs to the 4-toluene sulfonate uptake permease (TSUP) (TC 2.A.102) family. A metal cation is required as a cofactor. Subject to proteolytic cleavage by MamE.

It localises to the magnetosome membrane. In terms of biological role, plays 2 roles; promotes magnetite nucleation/formation and activates the MamE protease. Despite its near conservation of a protease-like sequence, this is probably not a protease. Required in conjunction with MamP for proteolysis of at least MamE, itself and MamP. May transport a solute that controls MamE's protease activity. May place individual iron atoms into the magnetite lattice. One of 7 genes (mamLQBIEMO) able to induce magnetosome membrane biogenesis; coexpression of mamLQRBIEMO in a deletion of the 17 gene mamAB operon restores magnetosome vesicle formation but not magnetite biosynthesis. The chain is Probable membrane transporter protein MamO from Magnetospirillum gryphiswaldense (strain DSM 6361 / JCM 21280 / NBRC 15271 / MSR-1).